We begin with the raw amino-acid sequence, 345 residues long: RNA polymerase II holoenzyme cyclin-like subunit (345 aa).

The 125-residue stretch at 23-147 (ESRRKLLLLE…KLAEFEFYLI (125 aa)) folds into the Cyclin N-terminal domain.

It belongs to the cyclin family. Cyclin C subfamily. As to quaternary structure, component of the SRB8-11 complex, a regulatory module of the Mediator complex.

The protein resides in the nucleus. In terms of biological role, component of the SRB8-11 complex. The SRB8-11 complex is a regulatory module of the Mediator complex which is itself involved in regulation of basal and activated RNA polymerase II-dependent transcription. The SRB8-11 complex may be involved in the transcriptional repression of a subset of genes regulated by Mediator. It may inhibit the association of the Mediator complex with RNA polymerase II to form the holoenzyme complex. The SRB8-11 complex phosphorylates the C-terminal domain (CTD) of the largest subunit of RNA polymerase II. This chain is RNA polymerase II holoenzyme cyclin-like subunit (SSN8), found in Debaryomyces hansenii (strain ATCC 36239 / CBS 767 / BCRC 21394 / JCM 1990 / NBRC 0083 / IGC 2968) (Yeast).